The chain runs to 455 residues: MDPRLREEVVRLIIALTSDNGASLSKGLESRVSALEKTSQIHSDTILRITQGLDDANKRIIALEQSRDDLVASVSDAQLAISRLESSIGALQTVVNGLDSSVTQLGARVGQLETGLAELRVDHDNLVARVDTAERNIGSLTTELSTLTLRVTSIQADFESRISTLERTAVTSAGAPLSIRNNRMTMGLNDGLTLSGNNLAIRLPGNTGLNIQNGGLQFRFNTDQFQIVNNNLTLKTTVFDSINSRIGATEQSYVASAVTPLRLNSSTKVLDMLIDSSTLEINSSGQLTVRSTSPNLRYPIADVSGGIGMSPNYRFRQSMWIGIVSYSGSGLNWRVQVNSDIFIVDDYIHICLPAFDGFSIADGGDLSLNFVTGLLPPLLTGDTEPAFHNDVVTYGAQTVAIGLSSGGAPQYMSKNLWVEQWQDGVLRLRVEGGGSITHSNSKWPAMTVSYPRSFT.

The segment at 1–307 is tail; the sequence is MDPRLREEVV…YPIADVSGGI (307 aa). Residues 116-148 adopt a coiled-coil conformation; it reads LAELRVDHDNLVARVDTAERNIGSLTTELSTLT. Asn231, Asn264, and Asn282 each carry an N-linked (GlcNAc...) asparagine; by host glycan. A head region spans residues 308–455; it reads GMSPNYRFRQ…MTVSYPRSFT (148 aa).

The protein belongs to the orthoreovirus sigma-1 protein family. Homotrimer. Interacts (via the head region) with human F11R. Post-translationally, undergoes dramatic conformational rearrangements during viral disassembly in the endocytic pathway.

It localises to the virion. Fiber-like molecule that attaches the virion to the host cell membrane by binding to the primary receptor F11R/JAM-A and to sialic acid containing proteins (coreceptor). The interaction of sigma-1 with F11R is required for NF-kB activation and apoptosis. Binding to both sialic acid and F11R is required to induce maximal levels of apoptosis. The chain is Outer capsid protein sigma-1 (S1) from Reovirus type 3 (strain Dearing) (T3D).